The chain runs to 337 residues: GTPase Obg (337 aa).

The 158-residue stretch at 1-158 (MFVDRVIIEL…HHIELELKLI (158 aa)) folds into the Obg domain. An OBG-type G domain is found at 159–330 (ADVGLVGFPN…LIEKMTQRLS (172 aa)). GTP contacts are provided by residues 165-172 (GFPNAGKS), 190-194 (FTTLQ), 212-215 (DIPG), 282-285 (NKID), and 311-313 (SAV). The Mg(2+) site is built by Ser-172 and Thr-192.

This sequence belongs to the TRAFAC class OBG-HflX-like GTPase superfamily. OBG GTPase family. As to quaternary structure, monomer. It depends on Mg(2+) as a cofactor.

The protein resides in the cytoplasm. Its function is as follows. An essential GTPase which binds GTP, GDP and possibly (p)ppGpp with moderate affinity, with high nucleotide exchange rates and a fairly low GTP hydrolysis rate. Plays a role in control of the cell cycle, stress response, ribosome biogenesis and in those bacteria that undergo differentiation, in morphogenesis control. In Protochlamydia amoebophila (strain UWE25), this protein is GTPase Obg.